The chain runs to 749 residues: Taperin (749 aa).

A disordered region spans residues 144–348 (PAAPCRRGSP…IRPSSKPDME (205 aa)). Composition is skewed to polar residues over residues 169–179 (SAATRTPTNRS), 230–239 (LQKTGSNSFT), and 250–266 (VNRSLSNGPMTQESPTG). Ser274 is subject to Phosphoserine. Residues 323–335 (QRQWVSSATSAND) are compositionally biased toward polar residues. Positions 337-347 (FEIRPSSKPDM) are enriched in basic and acidic residues. Residues Ser401, Ser457, and Ser501 each carry the phosphoserine modification. Disordered regions lie at residues 502–586 (EEEA…TTLE), 636–673 (FEYPSESSLAQEEAEEEEEEEGEEDGEEEEVGPDSEKP), and 730–749 (LTPASQNDLSDFRSEPALYF). Composition is skewed to polar residues over residues 534–544 (ELLNRGSNTFT) and 558–570 (HLSQTNGQSQQGA). Positions 647-668 (EEAEEEEEEEGEEDGEEEEVGP) are enriched in acidic residues.

Belongs to the taperin family. Interacts with GRXCR2; the interaction restricts TPRN to the stereocilum basal region. Interacts with actin ACTB; the interaction may stabilize stereocilia. Interacts with CLIC5. Interacts with PTPRQ. TPRN, CLIC5 and PTPQR form concentric rings at the base of stereocilia and may form a complex. Interacts with phosphatase PPP1CA; the interaction results in inhibition of PPP1CA phosphatase activity. Interacts with DNA damage response proteins XRCC6/KU70, XRCC5/KU80, PARP1, TOP1 and TOP2A; these interactions recruit TPRN to sites of DNA damage where it may play a role in DNA repair. In the organ of Corti, expressed in the inner ear hair cell stereocilia and the supporting cells (at protein level). Expressed in the sensory epithelia of the organ of Corti and vestibular end organs and, to a lesser extent, in Reisner's membrane and the spiral ligament (at protein level). At postnatal day 2, expression is detected in cochlea, liver, brain, kidney, heart and lung.

The protein localises to the cell projection. It localises to the stereocilium. The protein resides in the microvillus. It is found in the nucleus. Its subcellular location is the nucleoplasm. The protein localises to the cytoplasm. In terms of biological role, essential for hearing. Required for maintenance of stereocilia on both inner and outer hair cells. Necessary for the integrity of the stereociliary rootlet. May act as an actin cytoskeleton regulator involved in the regulation of actin dynamics at the pointed end in hair cells. Forms rings at the base of stereocilia and binds actin filaments in the stereocilia which may stabilize the stereocilia. Acts as a strong inhibitor of PPP1CA phosphatase activity. Recruited to sites of DNA damage and may play a role in DNA damage repair. This Mus musculus (Mouse) protein is Taperin (Tprn).